The sequence spans 296 residues: GTPase Era (296 aa).

In terms of domain architecture, Era-type G spans 2 to 171; it reads KAGFIAVVGR…LEALDPYLED (170 aa). A G1 region spans residues 10–17; sequence GRPNVGKS. Residue 10–17 participates in GTP binding; it reads GRPNVGKS. The tract at residues 36-40 is G2; it reads GTTRD. Residues 57–60 are G3; the sequence is DTPG. GTP contacts are provided by residues 57–61 and 120–123; these read DTPGI and NKVD. The segment at 120-123 is G4; that stretch reads NKVD. The interval 150–152 is G5; it reads ASG. The KH type-2 domain occupies 202-279; the sequence is TRDEIPHSVA…YLGLWVKVKD (78 aa).

This sequence belongs to the TRAFAC class TrmE-Era-EngA-EngB-Septin-like GTPase superfamily. Era GTPase family. In terms of assembly, monomer.

Its subcellular location is the cytoplasm. The protein resides in the cell inner membrane. An essential GTPase that binds both GDP and GTP, with rapid nucleotide exchange. Plays a role in 16S rRNA processing and 30S ribosomal subunit biogenesis and possibly also in cell cycle regulation and energy metabolism. In Fusobacterium nucleatum subsp. nucleatum (strain ATCC 25586 / DSM 15643 / BCRC 10681 / CIP 101130 / JCM 8532 / KCTC 2640 / LMG 13131 / VPI 4355), this protein is GTPase Era.